The primary structure comprises 784 residues: MSALQASLLLRPLPSPLPPRRRLPLPSSSASFPRAGHHRRLPLPLRALASEGPQPAPSPAPDPPPPELPAAPEAEEVVGTAAAEGGGKVEEEELEDLVEKGRAWVLALAAAVVAAARRFFDWVVSGDWMSWWPFWRPDRRLQRLIDDADANPADPAKQSALLHELNKFSPEDVIKRFEQRSHAVDSRGVAEYLRALILTNGIADYLPDEQSGRSASLPALLQELKQRVSGNEDKPFMNPGISEKQPLHVVMVDPKATGRSTRFAQEIFSTVLFTIAVGLMWVMGAAALQKYIGSLGGIGASGVGSSSSYSPKELNKDIMPEKNVKTFKDVKGCDDAKKELEEVVEYLKNPSKFTRLGGKLPKGILLTGSPGTGKTLLAKAIAGEAGVPFFYRAGSEFEEMFVGVGARRVRSLFQAAKKKAPCIVFIDEIDAVGSTRKQWEGHTKKTLHQLLVEMDGFEQNEGIIVMAATNLPDILDPALTRPGRFDRHIVVPNPDVRGRQEILELYLQDKPVSSDVDVNAIARSTPGFNGADLANLVNIAAIKAAVEGADKLAAAQLEFAKDRIIMGTERKSMFISDESKKACLFKLLYFILRELILTAYHESGHAIVALNTQGAHPIHKATILPRGSALGMVTQLPSQDETSISKKQLLARLDVCMGGRVAEELIFGEDNVTTGARNDLHTATELAQYMVSNCGMSDAIGPVHVKERPSVEMQSRIDAEVVKLLREAYGRVKRLLKKHEKQLHALANALLERETLTADEINKVVHPYQEEPQLSFQEEDFALT.

Composition is skewed to low complexity over residues 1–12 (MSALQASLLLRP), 24–34 (PLPSSSASFPR), and 42–53 (PLPLRALASEGP). The N-terminal 47 residues, 1–47 (MSALQASLLLRPLPSPLPPRRRLPLPSSSASFPRAGHHRRLPLPLRA), are a transit peptide targeting the chloroplast and mitochondrion. The interval 1–71 (MSALQASLLL…DPPPPELPAA (71 aa)) is disordered. Pro residues predominate over residues 54–69 (QPAPSPAPDPPPPELP). The next 2 membrane-spanning stretches (helical) occupy residues 104–124 (WVLA…DWVV) and 267–287 (IFST…GAAA). 368 to 375 (GSPGTGKT) is a binding site for ATP. H601 provides a ligand contact to Zn(2+). The active site involves E602. H605 and D679 together coordinate Zn(2+).

This sequence in the N-terminal section; belongs to the AAA ATPase family. The protein in the C-terminal section; belongs to the peptidase M41 family. Requires Zn(2+) as cofactor.

It is found in the mitochondrion membrane. The protein resides in the plastid. It localises to the chloroplast thylakoid membrane. In terms of biological role, probable ATP-dependent zinc metallopeptidase. This chain is ATP-dependent zinc metalloprotease FTSH 9, chloroplastic/mitochondrial (FTSH9), found in Oryza sativa subsp. japonica (Rice).